The sequence spans 374 residues: Translocating chain-associated membrane protein 1 (374 aa).

At 1-29 the chain is on the cytoplasmic side; that stretch reads MAIRKKSNKNPPLLSHEFLLQNHADIVSC. A helical membrane pass occupies residues 30–50; sequence LAMLFLLGLMFEVTAKGAIIF. At 51–76 the chain is on the lumenal side; sequence VALQYNVTRPATEEQATESASLYHYG. Asparagine 56 is a glycosylation site (N-linked (GlcNAc...) asparagine). The helical transmembrane segment at 77–97 threads the bilayer; it reads IKDLATVLFYMLVAIIIHAII. Over 98–121 the chain is Cytoplasmic; it reads QEYVLDKINRRMHFSKTKHSKFNE. The 210-residue stretch at 117-326 folds into the TLC domain; the sequence is SKFNESGQLS…NFQLRRWREH (210 aa). The helical transmembrane segment at 122 to 142 threads the bilayer; that stretch reads SGQLSAFYLFACVWGTFILIS. The Lumenal portion of the chain corresponds to 143-159; that stretch reads ENYISDPTILWRAYPHN. A helical membrane pass occupies residues 160–180; that stretch reads LMTFQTKFFYISQLAYWLHAF. The Cytoplasmic segment spans residues 181–192; sequence PELYFQKTKKED. Residues 193–213 form a helical membrane-spanning segment; that stretch reads IPRQLVYIGLYLFHIAGAYLL. Over 214-217 the chain is Lumenal; sequence NLNH. The helical transmembrane segment at 218–238 threads the bilayer; sequence LGLVLLVLHYFVEFLFHISRL. The Cytoplasmic portion of the chain corresponds to 239–251; that stretch reads FYFSDEKYQKGFS. The chain crosses the membrane as a helical span at residues 252-272; that stretch reads LWAVLFVLGRLLTLILSVLTV. The Lumenal segment spans residues 273–297; sequence GFGLARAENQKLDFSTGNFNVLAVR. The helical transmembrane segment at 298–318 threads the bilayer; that stretch reads IAVLASICITQAFMMWKFINF. Residues 319 to 374 lie on the Cytoplasmic side of the membrane; it reads QLRRWREHSAFQAPPVKRKPAVTKGRSSRKGTENGVNGTVTSNGADSPRNRKEKSS. Residues 333–374 form a disordered region; the sequence is PVKRKPAVTKGRSSRKGTENGVNGTVTSNGADSPRNRKEKSS. Positions 334 to 347 are enriched in basic residues; it reads VKRKPAVTKGRSSR. Residues 352–363 show a composition bias toward polar residues; the sequence is NGVNGTVTSNGA. Position 365 is a phosphoserine (serine 365).

The protein belongs to the TRAM family. In terms of assembly, interacts with SEC61B. May interact with Derlin-1/DERL1. N-glycosylated.

Its subcellular location is the endoplasmic reticulum membrane. Involved in the translocation of nascent protein chains into or through the endoplasmic reticulum (ER) membrane by facilitating the proper chain positioning at the SEC61 channel. Regulates the exposure of nascent secretory protein chain to the cytosol during translocation into the ER. May affect the phospholipid bilayer in the vicinity of the lateral gate of the SEC61 channel, thereby facilitating ER protein transport. Intimately associates with transmembrane (TM) domain of nascent membrane proteins during the entire integration process into the ER membrane. Associates with the second TM domain of G-protein-coupled receptor opsin/OPSD nascent chain in the ER membrane, which may facilitate its integration into the membrane. Under conditions of ER stress, participates in the disposal of misfolded ER membrane proteins during the unfolded protein response (UPR), an integrated stress response (ISR) pathway, by selectively retrotranslocating misfolded ER-membrane proteins from the ER into the cytosol where they are ubiquitinated and degraded by the proteasome. The protein is Translocating chain-associated membrane protein 1 of Mus musculus (Mouse).